The chain runs to 83 residues: Large ribosomal subunit protein bL27 (83 aa).

Belongs to the bacterial ribosomal protein bL27 family.

This chain is Large ribosomal subunit protein bL27, found in Bifidobacterium adolescentis (strain ATCC 15703 / DSM 20083 / NCTC 11814 / E194a).